The chain runs to 74 residues: Small ribosomal subunit protein bS18 (74 aa).

This sequence belongs to the bacterial ribosomal protein bS18 family. In terms of assembly, part of the 30S ribosomal subunit. Forms a tight heterodimer with protein bS6.

In terms of biological role, binds as a heterodimer with protein bS6 to the central domain of the 16S rRNA, where it helps stabilize the platform of the 30S subunit. In Novosphingobium aromaticivorans (strain ATCC 700278 / DSM 12444 / CCUG 56034 / CIP 105152 / NBRC 16084 / F199), this protein is Small ribosomal subunit protein bS18.